Here is a 293-residue protein sequence, read N- to C-terminus: MFSGSIVALVTPLDTDGEVDYNSLKSLVDYHIKAGTNGIVAVGTTGESATLSVEEHVKLVMKTLEFADGRIPVIAGTGANATHEAVTFSKLFHDSGVAGCLSVTPYYNKPTQEGLFQHYKAISEATDIPQILYNVPGRTAVDLLPETVARLAELDNIVALKDATGDLERVAITRELCGENFIQLSGDDATALDFVKLGGHGVISVTSNIAAKDMATMFALAAQGKFEEAEIINQRLMPLHNDLFVEANPIPVKWAAHRLGMITHSDIRLPLTELSLSAQPTVEQALKSAGLLK.

Thr-45 contributes to the pyruvate binding site. The active-site Proton donor/acceptor is the Tyr-133. Catalysis depends on Lys-161, which acts as the Schiff-base intermediate with substrate. Position 203 (Ile-203) interacts with pyruvate.

Belongs to the DapA family. In terms of assembly, homotetramer; dimer of dimers.

It localises to the cytoplasm. The enzyme catalyses L-aspartate 4-semialdehyde + pyruvate = (2S,4S)-4-hydroxy-2,3,4,5-tetrahydrodipicolinate + H2O + H(+). It functions in the pathway amino-acid biosynthesis; L-lysine biosynthesis via DAP pathway; (S)-tetrahydrodipicolinate from L-aspartate: step 3/4. Functionally, catalyzes the condensation of (S)-aspartate-beta-semialdehyde [(S)-ASA] and pyruvate to 4-hydroxy-tetrahydrodipicolinate (HTPA). The chain is 4-hydroxy-tetrahydrodipicolinate synthase from Aliivibrio fischeri (strain MJ11) (Vibrio fischeri).